Consider the following 355-residue polypeptide: Nuclear hormone receptor family member nhr-127 (355 aa).

A DNA-binding region (nuclear receptor) is located at residues 10–86 (SIPCEVCKNQ…AGMKAEKIQK (77 aa)). 2 consecutive NR C4-type zinc fingers follow at residues 13-33 (CEVC…CGAC) and 49-69 (CKDG…CRYC). An NR LBD domain is found at 126-355 (NPHNASEGCS…IVQIVQNNFY (230 aa)).

The protein belongs to the nuclear hormone receptor family.

The protein resides in the nucleus. Orphan nuclear receptor. May play a role in modulation of lifespan and immunity. The sequence is that of Nuclear hormone receptor family member nhr-127 (nhr-127) from Caenorhabditis elegans.